The following is a 339-amino-acid chain: Coproporphyrin III ferrochelatase (339 aa).

Fe-coproporphyrin III is bound by residues Ser52 and Tyr121. Residues His181 and Glu264 each coordinate Fe(2+).

It belongs to the ferrochelatase family.

The protein localises to the cytoplasm. It catalyses the reaction Fe-coproporphyrin III + 2 H(+) = coproporphyrin III + Fe(2+). Its pathway is porphyrin-containing compound metabolism; protoheme biosynthesis. Involved in coproporphyrin-dependent heme b biosynthesis. Catalyzes the insertion of ferrous iron into coproporphyrin III to form Fe-coproporphyrin III. In Mycolicibacterium vanbaalenii (strain DSM 7251 / JCM 13017 / BCRC 16820 / KCTC 9966 / NRRL B-24157 / PYR-1) (Mycobacterium vanbaalenii), this protein is Coproporphyrin III ferrochelatase.